The following is a 266-amino-acid chain: E3 ubiquitin-protein ligase RNF170 (266 aa).

At 1 to 26 (MEGSVCVDGAAAPAPDEASLIEGVSN) the chain is on the lumenal side. The chain crosses the membrane as a helical span at residues 27–47 (AVLLVLVLSVTLLAGLTTLLC). Residues 48–209 (RSEQQRIHPE…GGLFWMFRVR (162 aa)) lie on the Cytoplasmic side of the membrane. The RING-type zinc finger occupies 88–131 (CPVCLQQAVLPVETNCGHLFCGSCIIAYWRYGTWLGAISCPICR). Residues 210 to 230 (ILLCVCGALAYLVSPLDFLPE) traverse the membrane as a helical segment. Residue glycine 231 is a topological domain, lumenal. A helical membrane pass occupies residues 232 to 252 (VLGLLGFLDDFFVILLLFIYI). Residues 253–266 (SIMYREVVTQRLAG) lie on the Cytoplasmic side of the membrane.

As to expression, highly expressed in the developing brain, and less within intersomitic structures of the trunk.

It is found in the endoplasmic reticulum membrane. The enzyme catalyses S-ubiquitinyl-[E2 ubiquitin-conjugating enzyme]-L-cysteine + [acceptor protein]-L-lysine = [E2 ubiquitin-conjugating enzyme]-L-cysteine + N(6)-ubiquitinyl-[acceptor protein]-L-lysine.. Its pathway is protein modification; protein ubiquitination. E3 ubiquitin-protein ligase that plays an essential role in stimulus-induced inositol 1,4,5-trisphosphate receptor (ITPR) ubiquitination and degradation via the endoplasmic reticulum-associated degradation (ERAD) pathway. Also involved in ITPR turnover in resting cells. This Danio rerio (Zebrafish) protein is E3 ubiquitin-protein ligase RNF170 (rnf170).